The chain runs to 240 residues: 2,3,4,5-tetrahydropyridine-2,6-dicarboxylate N-acetyltransferase (240 aa).

It belongs to the transferase hexapeptide repeat family. DapH subfamily.

It catalyses the reaction (S)-2,3,4,5-tetrahydrodipicolinate + acetyl-CoA + H2O = L-2-acetamido-6-oxoheptanedioate + CoA. Its pathway is amino-acid biosynthesis; L-lysine biosynthesis via DAP pathway; LL-2,6-diaminopimelate from (S)-tetrahydrodipicolinate (acetylase route): step 1/3. Its function is as follows. Catalyzes the transfer of an acetyl group from acetyl-CoA to tetrahydrodipicolinate. The protein is 2,3,4,5-tetrahydropyridine-2,6-dicarboxylate N-acetyltransferase of Staphylococcus epidermidis (strain ATCC 35984 / DSM 28319 / BCRC 17069 / CCUG 31568 / BM 3577 / RP62A).